Consider the following 155-residue polypeptide: SsrA-binding protein (155 aa).

Basic and acidic residues predominate over residues Asp-123 to Gln-142. The interval Asp-123 to Thr-155 is disordered. Over residues Leu-143–Thr-155 the composition is skewed to basic residues.

It belongs to the SmpB family.

It is found in the cytoplasm. Functionally, required for rescue of stalled ribosomes mediated by trans-translation. Binds to transfer-messenger RNA (tmRNA), required for stable association of tmRNA with ribosomes. tmRNA and SmpB together mimic tRNA shape, replacing the anticodon stem-loop with SmpB. tmRNA is encoded by the ssrA gene; the 2 termini fold to resemble tRNA(Ala) and it encodes a 'tag peptide', a short internal open reading frame. During trans-translation Ala-aminoacylated tmRNA acts like a tRNA, entering the A-site of stalled ribosomes, displacing the stalled mRNA. The ribosome then switches to translate the ORF on the tmRNA; the nascent peptide is terminated with the 'tag peptide' encoded by the tmRNA and targeted for degradation. The ribosome is freed to recommence translation, which seems to be the essential function of trans-translation. The polypeptide is SsrA-binding protein (Methylibium petroleiphilum (strain ATCC BAA-1232 / LMG 22953 / PM1)).